The primary structure comprises 176 residues: MIMSKETLIKSIREIPDFPIPGILFYDVTTLFKDPWCLQELSNIMFEMYKDKGITKVVGIESRGFIMGPILATRLNAGFIPIRKPGKLPAEVIEESYDKEYGTDTVQIHKDALDENDVVLLHDDLLATGGTMKAACELVKKLKPKKVYVNFIIELKDLNGKSVFGDDVEVESVLTL.

It belongs to the purine/pyrimidine phosphoribosyltransferase family. As to quaternary structure, homodimer.

The protein resides in the cytoplasm. The enzyme catalyses AMP + diphosphate = 5-phospho-alpha-D-ribose 1-diphosphate + adenine. It participates in purine metabolism; AMP biosynthesis via salvage pathway; AMP from adenine: step 1/1. Its function is as follows. Catalyzes a salvage reaction resulting in the formation of AMP, that is energically less costly than de novo synthesis. The polypeptide is Adenine phosphoribosyltransferase (Bacteroides thetaiotaomicron (strain ATCC 29148 / DSM 2079 / JCM 5827 / CCUG 10774 / NCTC 10582 / VPI-5482 / E50)).